Here is a 155-residue protein sequence, read N- to C-terminus: Nodulin-related protein 2 (155 aa).

Met-1 carries the N-acetylmethionine modification. Disordered stretches follow at residues 1–37 (MNFI…PATN) and 85–155 (DEKS…GFLK). Positions 95–106 (DKAEKYLNDYES) are enriched in basic and acidic residues. The span at 120-130 (SQAEPASQPEP) shows a compositional bias: low complexity.

Interacts with DEK3.

Functionally, may be a negative regulator of the ABA signaling/synthesis pathway. The sequence is that of Nodulin-related protein 2 from Arabidopsis thaliana (Mouse-ear cress).